A 341-amino-acid chain; its full sequence is MALKPTMSQLLKNYDLERLAISTVASHTALQILRGAKKYGFRTIAVARGEAVAQFYRQFPFIDEVWVGDFANFRKTAEKLAANNAVFIPHGSYVEYVGWRQALEAPVPTLGCRELLRWEADQFKKMSLLEKAGIPIPRIYKTAEEVEGPVIVKLFGAKGGRGYFVARDRRELAERLKRVTEDYIIQEYLFGVPAYYHYFSSPVYSRLEIFGADIRYESNVDGRTFGWAEPTFVVVGNLPMVLRESLLPTIYTYGVQFLKAVEEAVGCKLAGPFCLESIIKDDMSIVVFEFSGRIVAGTNIYMGYGSPYSVLYFDKPMDMGERIAHEIKEAVKRGKIEHLFT.

2 residues coordinate 5-amino-1-(5-phospho-beta-D-ribosyl)imidazole-4-carboxamide: His-27 and Ser-92. In terms of domain architecture, ATP-grasp spans 113-328 (RELLRWEADQ…MGERIAHEIK (216 aa)). ATP-binding positions include 143-195 (AEEV…VPAY) and Glu-217. Residue Asn-237 participates in 5-amino-1-(5-phospho-beta-D-ribosyl)imidazole-4-carboxamide binding. The Mg(2+) site is built by Glu-276 and Glu-289.

Belongs to the phosphohexose mutase family. Requires Mg(2+) as cofactor. The cofactor is Mn(2+).

It carries out the reaction 5-amino-1-(5-phospho-beta-D-ribosyl)imidazole-4-carboxamide + formate + ATP = 5-formamido-1-(5-phospho-D-ribosyl)imidazole-4-carboxamide + ADP + phosphate. Its pathway is purine metabolism; IMP biosynthesis via de novo pathway; 5-formamido-1-(5-phospho-D-ribosyl)imidazole-4-carboxamide from 5-amino-1-(5-phospho-D-ribosyl)imidazole-4-carboxamide (formate route): step 1/1. Catalyzes the ATP- and formate-dependent formylation of 5-aminoimidazole-4-carboxamide-1-beta-d-ribofuranosyl 5'-monophosphate (AICAR) to 5-formaminoimidazole-4-carboxamide-1-beta-d-ribofuranosyl 5'-monophosphate (FAICAR) in the absence of folates. In Pyrobaculum aerophilum (strain ATCC 51768 / DSM 7523 / JCM 9630 / CIP 104966 / NBRC 100827 / IM2), this protein is 5-formaminoimidazole-4-carboxamide-1-(beta)-D-ribofuranosyl 5'-monophosphate synthetase.